Here is a 206-residue protein sequence, read N- to C-terminus: N-(5'-phosphoribosyl)anthranilate isomerase (206 aa).

The protein belongs to the TrpF family.

It carries out the reaction N-(5-phospho-beta-D-ribosyl)anthranilate = 1-(2-carboxyphenylamino)-1-deoxy-D-ribulose 5-phosphate. It functions in the pathway amino-acid biosynthesis; L-tryptophan biosynthesis; L-tryptophan from chorismate: step 3/5. In Nitrosococcus oceani (strain ATCC 19707 / BCRC 17464 / JCM 30415 / NCIMB 11848 / C-107), this protein is N-(5'-phosphoribosyl)anthranilate isomerase.